A 242-amino-acid chain; its full sequence is Exosome complex component ski6 (242 aa).

The protein belongs to the RNase PH family. Component of the RNA exosome complex. Specifically part of the catalytically inactive RNA exosome core complex (Exo-9) which may associate with the catalytic subunits rrp6 and dis3 in cytoplasmic- and nuclear-specific RNA exosome complex forms. Exo-9 is formed by a hexameric base ring of RNase PH domain-containing subunits and a cap ring consisting of csl4, rrp4 and rrp40.

The protein localises to the cytoplasm. It localises to the nucleus. It is found in the nucleolus. Functionally, non-catalytic component of the RNA exosome complex which has 3'-&gt;5' exoribonuclease activity and participates in a multitude of cellular RNA processing and degradation events. In the nucleus, the RNA exosome complex is involved in proper maturation of stable RNA species such as rRNA, snRNA and snoRNA, in the elimination of RNA processing by-products and non-coding 'pervasive' transcripts, such as antisense RNA species and cryptic unstable transcripts (CUTs), and of mRNAs with processing defects, thereby limiting or excluding their export to the cytoplasm. In the cytoplasm, the RNA exosome complex is involved in general mRNA turnover and in RNA surveillance pathways, preventing translation of aberrant mRNAs. The catalytic inactive RNA exosome core complex of 9 subunits (Exo-9) is proposed to play a pivotal role in the binding and presentation of RNA for ribonucleolysis, and to serve as a scaffold for the association with catalytic subunits and accessory proteins or complexes. ski6 is part of the hexameric ring of RNase PH domain-containing subunits proposed to form a central channel which threads RNA substrates for degradation. The polypeptide is Exosome complex component ski6 (ski6) (Schizosaccharomyces pombe (strain 972 / ATCC 24843) (Fission yeast)).